The following is a 246-amino-acid chain: MAGHSKWHNIQHRKGAQDAKRGKIFTKLIKEIVISAKIGGGRIENNHSLKIIIDKALAVNMRRNTIENAVKRGNGDFDGNNYEKIRYEGYSLGGTAIMVDCLSDNRNRTISDIRHAFLKHGGNLGRDGSVSYLFTKQGFISFDTGNENQIMEIALDEGAQDIITNDDDSIDVITTPEDFFTIKDVLTTSGLEPSHAEVTMEPASRVELNLSDAEKFMKLIDHLEDLDETKKIYHNADISDKVMVRL.

Belongs to the TACO1 family.

It is found in the cytoplasm. The protein is Probable transcriptional regulatory protein Rmag_0394 of Ruthia magnifica subsp. Calyptogena magnifica.